The sequence spans 592 residues: Putative uric acid sigma-54-dependent transcriptional regulator UacR (592 aa).

A PAS domain is found at 158–229 (ISKIFATMID…HMQHIVSWDD (72 aa)). In terms of domain architecture, Sigma-54 factor interaction spans 272–502 (LVGECRVMRQ…LSNLMEYLVN (231 aa)). ATP-binding positions include 300–307 (GESGTGKE) and 364–373 (ANTGTLFLDE). A DNA-binding region (H-T-H motif) is located at residues 567 to 585 (KQVADELGIGIATLYRKIK).

In terms of biological role, essential for both formate-dependent and formate-independent uric acid degradation. May be directly involved in the transcription of uacF in response to hypoxanthine, xanthine, and uric acid. This Escherichia coli (strain K12) protein is Putative uric acid sigma-54-dependent transcriptional regulator UacR.